The following is a 418-amino-acid chain: Sterigmatocystin 8-O-methyltransferase (418 aa).

Residues 1 to 41 (MTLPNKAALVGLAHTLSEQVKRYLVTADETKSPEDHKLCIE) constitute a propeptide that is removed on maturation. 170–176 (MRSAAYF) serves as a coordination point for substrate. The interval 206 to 225 (LFDYYSTVDEVRGRRFDLGM) is substrate binding. Residues 254–255 (GG), aspartate 277, 297–298 (DI), and arginine 313 each bind S-adenosyl-L-methionine. The active-site Proton acceptor is the histidine 317.

The protein belongs to the class I-like SAM-binding methyltransferase superfamily. Cation-independent O-methyltransferase family. COMT subfamily.

The enzyme catalyses sterigmatocystin + S-adenosyl-L-methionine = 8-O-methylsterigmatocystin + S-adenosyl-L-homocysteine + H(+). It catalyses the reaction dihydrosterigmatocystin + S-adenosyl-L-methionine = 8-O-methyldihydrosterigmatocystin + S-adenosyl-L-homocysteine + H(+). It participates in mycotoxin biosynthesis; aflatoxin biosynthesis. Functionally, involved in the conversion of sterigmatocystin to O-methylsterigmatocystin (OMST) and dihydrosterigmatocystin to dihydro-o-methylsterigmatocystin in the aflatoxin biosynthesis pathway. In Aspergillus flavus (strain ATCC 200026 / FGSC A1120 / IAM 13836 / NRRL 3357 / JCM 12722 / SRRC 167), this protein is Sterigmatocystin 8-O-methyltransferase (omtA).